Reading from the N-terminus, the 619-residue chain is 1-deoxy-D-xylulose-5-phosphate synthase (619 aa).

Residues His-80 and 121 to 123 contribute to the thiamine diphosphate site; that span reads GHS. Residue Asp-152 participates in Mg(2+) binding. Thiamine diphosphate-binding positions include 153-154, Asn-181, Tyr-288, and Glu-370; that span reads GA. Position 181 (Asn-181) interacts with Mg(2+).

The protein belongs to the transketolase family. DXPS subfamily. Homodimer. The cofactor is Mg(2+). Thiamine diphosphate serves as cofactor.

The enzyme catalyses D-glyceraldehyde 3-phosphate + pyruvate + H(+) = 1-deoxy-D-xylulose 5-phosphate + CO2. The protein operates within metabolic intermediate biosynthesis; 1-deoxy-D-xylulose 5-phosphate biosynthesis; 1-deoxy-D-xylulose 5-phosphate from D-glyceraldehyde 3-phosphate and pyruvate: step 1/1. Its function is as follows. Catalyzes the acyloin condensation reaction between C atoms 2 and 3 of pyruvate and glyceraldehyde 3-phosphate to yield 1-deoxy-D-xylulose-5-phosphate (DXP). This is 1-deoxy-D-xylulose-5-phosphate synthase from Yersinia pseudotuberculosis serotype O:3 (strain YPIII).